The primary structure comprises 224 residues: Cytidylate kinase (224 aa).

11–19 (GPAAAGKST) is a binding site for ATP.

Belongs to the cytidylate kinase family. Type 1 subfamily.

The protein resides in the cytoplasm. The catalysed reaction is CMP + ATP = CDP + ADP. The enzyme catalyses dCMP + ATP = dCDP + ADP. The polypeptide is Cytidylate kinase (Geobacillus thermodenitrificans (strain NG80-2)).